The primary structure comprises 1011 residues: Probable calcium-transporting ATPase (1011 aa).

Over 1-65 the chain is Cytoplasmic; sequence MLPENLPTDP…WKLVLAQFED (65 aa). A helical transmembrane segment spans residues 66 to 84; that stretch reads TLVRILLLAATVSFAMAVV. Residues 85–90 lie on the Extracellular side of the membrane; the sequence is ENNAAD. The helical transmembrane segment at 91 to 110 threads the bilayer; it reads FVEPFIILLILILNATVGVW. The Cytoplasmic portion of the chain corresponds to 111 to 258; that stretch reads QENRAEGAIE…QVKLDEFGVL (148 aa). Residues 259–278 traverse the membrane as a helical segment; the sequence is LSKVIGYICLVVFAVNLVRW. Residues 279–303 lie on the Extracellular side of the membrane; that stretch reads YATHKPTKNETFFTRYIQPSVHCLK. Residues 304–321 form a helical membrane-spanning segment; it reads VAVALAVAAIPEGLPAVV. The Cytoplasmic portion of the chain corresponds to 322–770; sequence TTCLALGTRR…RYLISSNIGE (449 aa). The active-site 4-aspartylphosphate intermediate is the aspartate 357. Lysine 514 serves as a coordination point for ATP. The chain crosses the membrane as a helical span at residues 771–794; the sequence is VVCILVTGLFGLPEALSPVQLLWV. Residues 795-835 lie on the Extracellular side of the membrane; it reads NLVTDGLPATALGFNAPDRDIMEQRPRRMEEPIVNGWLFMR. Residues 836–856 traverse the membrane as a helical segment; sequence YMVIGVYVGLATVGGFLWWFL. The Cytoplasmic portion of the chain corresponds to 857 to 885; that stretch reads RHGFSWHDLTTYTACSDMTNGTCLLLANP. The chain crosses the membrane as a helical span at residues 886-905; sequence QTARAIALSILVVVEMLNAL. At 906 to 922 the chain is on the extracellular side; it reads NALSENASLIVSRPSSN. Residues 923–942 traverse the membrane as a helical segment; sequence VWLLFAIFSSLSLHLIIMYV. At 943–1011 the chain is on the cytoplasmic side; that stretch reads PFFAKLFNIV…MEKAQEKKKD (69 aa).

It belongs to the cation transport ATPase (P-type) (TC 3.A.3) family.

It localises to the flagellar pocket. The protein localises to the cell membrane. The catalysed reaction is Ca(2+)(in) + ATP + H2O = Ca(2+)(out) + ADP + phosphate + H(+). Functionally, this magnesium-dependent enzyme catalyzes the hydrolysis of ATP coupled with the transport of the calcium. This chain is Probable calcium-transporting ATPase (TBA1), found in Trypanosoma brucei brucei.